Here is a 335-residue protein sequence, read N- to C-terminus: Transcription factor bHLH63 (335 aa).

Positions 110–160 are disordered; it reads MTMNRDDLVEEGEEEKSKITEQNNGSTKSIKKMKHKAKKEENNFSNDSSKV. In terms of domain architecture, bHLH spans 178 to 228; the sequence is QATDSHSIAERVRREKISERMKFLQDLVPGCDKITGKAGMLDEIINYVQSL.

As to quaternary structure, homodimer. Interacts with IBH1. Binds reversibly to CRY2 after blue light illumination. Expressed constitutively in roots, leaves, and stems.

It is found in the nucleus. Its function is as follows. Transcription factor that binds DNA to G box 5'-CACGTG-3' and, to a lower extent, to E-box 5'-CANNTG-3' in vitro. Binds to chromatin DNA of the FT gene and promotes its expression, and thus triggers flowering in response to blue light. This Arabidopsis thaliana (Mouse-ear cress) protein is Transcription factor bHLH63 (BHLH63).